Here is a 151-residue protein sequence, read N- to C-terminus: MGRMHSAGKGISSSAIPYSRNAPSWFKLSSDEVVEQVIKYARKGLTPSQIGVILRDAHGVSQAKIVTGNKVLRILKSNGLAPELPEDLYFLIKKAVAVRKHLERNRKDKDSKFRLILIESRIHRLARYYRTVSVLPPNWKYESATASALVA.

The protein belongs to the universal ribosomal protein uS15 family.

The sequence is that of Small ribosomal subunit protein uS15 (RPS13) from Candida maltosa (Yeast).